The chain runs to 64 residues: Large ribosomal subunit protein uL30 (64 aa).

The protein belongs to the universal ribosomal protein uL30 family. In terms of assembly, part of the 50S ribosomal subunit.

The chain is Large ribosomal subunit protein uL30 from Rhodopseudomonas palustris (strain BisB18).